A 588-amino-acid polypeptide reads, in one-letter code: MTAAPASPQQMRDRLLQAIDSQSNIRNMVAVLEVISSLERYPITKEALEETRLGKLINDVRKKTKNEELAKRAKRLLRSWQKLIEPVHQNEVALRALAGAAGSANGGAHNCRPEMGVAGAPKSIHDLKNRNDIQRLPGQRLDRLGSRKRRGDQRDLGHPGPPHKVSKGSPDPLVPNASPLPTNGISGSPESLPSPLDGSGHLGPDGSRLEPSDNEKHSTKIPVNAVRPRPSSPGLGKPPVPCLQTKAAQLQQLDRADESPGPPYPRGSSRCSFSPRNSRHEGSFSRHRSSYIPKGQVSSPSPWPQPPDNTQVPSPLPLAQPPTPPVRRQELLPNAESPVHWPEQSEGHPRLTGPACRAGFSPDSSKADSDATSSGGSDSKKKKRYRPRDYTVNLDGQVAEAGVKPVRLKERKLTFDPMTRQIRPLTQKEPVRADSPVPTEQLPRTELEQQEVKASLQSPFEQTNWKELSRNEIIQSYLSRQSSLLSSSGAQTPGAHHFMAEYLKQEESSRQGARQPHVLLPLPTPTDLPGLTREVTQDDLDRIQAQQWPGVNGCEDTQGNWYDWTQCISLDPHGDDGRLNILPYVCLD.

A TFIIS N-terminal domain is found at 10–87 (QMRDRLLQAI…RSWQKLIEPV (78 aa)). Disordered stretches follow at residues 112–393 (RPEM…YTVN) and 412–441 (KLTFDPMTRQIRPLTQKEPVRADSPVPTEQ). A compositionally biased stretch (basic and acidic residues) spans 123-133 (SIHDLKNRNDI). Over residues 179–191 (PLPTNGISGSPES) the composition is skewed to polar residues. The span at 207-218 (SRLEPSDNEKHS) shows a compositional bias: basic and acidic residues. Residues 314–325 (SPLPLAQPPTPP) are compositionally biased toward pro residues. 2 positions are modified to phosphoserine: serine 435 and serine 458.

The protein belongs to the Mediator complex subunit 26 family. Component of the Mediator complex, which is composed of MED1, MED4, MED6, MED7, MED8, MED9, MED10, MED11, MED12, MED13, MED13L, MED14, MED15, MED16, MED17, MED18, MED19, MED20, MED21, MED22, MED23, MED24, MED25, MED26, MED27, MED29, MED30, MED31, CCNC, CDK8 and CDC2L6/CDK11. The MED12, MED13, CCNC and CDK8 subunits form a distinct module termed the CDK8 module. Mediator containing the CDK8 module is less active than Mediator lacking this module in supporting transcriptional activation. Individual preparations of the Mediator complex lacking one or more distinct subunits have been variously termed ARC, CRSP, DRIP, PC2, SMCC and TRAP. Interacts with CEBPB (when not methylated).

Its subcellular location is the nucleus. In terms of biological role, component of the Mediator complex, a coactivator involved in the regulated transcription of nearly all RNA polymerase II-dependent genes. Mediator functions as a bridge to convey information from gene-specific regulatory proteins to the basal RNA polymerase II transcription machinery. Mediator is recruited to promoters by direct interactions with regulatory proteins and serves as a scaffold for the assembly of a functional pre-initiation complex with RNA polymerase II and the general transcription factors. The sequence is that of Mediator of RNA polymerase II transcription subunit 26 (Med26) from Mus musculus (Mouse).